Here is a 372-residue protein sequence, read N- to C-terminus: Spermidine/putrescine import ATP-binding protein PotA (372 aa).

Positions 12–242 constitute an ABC transporter domain; sequence IQLKGLNKSF…PTNLFVARFI (231 aa). 44–51 contacts ATP; it reads GPSGCGKT.

The protein belongs to the ABC transporter superfamily. Spermidine/putrescine importer (TC 3.A.1.11.1) family. In terms of assembly, the complex is composed of two ATP-binding proteins (PotA), two transmembrane proteins (PotB and PotC) and a solute-binding protein (PotD).

The protein localises to the cell inner membrane. The enzyme catalyses ATP + H2O + polyamine-[polyamine-binding protein]Side 1 = ADP + phosphate + polyamineSide 2 + [polyamine-binding protein]Side 1.. In terms of biological role, part of the ABC transporter complex PotABCD involved in spermidine/putrescine import. Responsible for energy coupling to the transport system. This is Spermidine/putrescine import ATP-binding protein PotA from Photobacterium profundum (strain SS9).